We begin with the raw amino-acid sequence, 296 residues long: 4-hydroxybenzoate octaprenyltransferase (296 aa).

8 helical membrane passes run 28 to 48 (PIGIYLLLWPTLSAVWIAGNG), 52 to 72 (LANVLIFGLGVVLMRAAGCCI), 102 to 122 (ALTLFAILVGVSFLLVLCTNS), 145 to 167 (TYYPQVVLGAAYSWGIPMAFTAA), 174 to 196 (GAWLLYIANLLWTVGYDTYYAMV), 219 to 239 (SIILTLQLLSLGCLLLAGSRF), 241 to 261 (LGGWFHLGLLGAAACFAWEYW), and 275 to 295 (FLHNHWAGMLVFIGVVLDYAL).

Belongs to the UbiA prenyltransferase family. It depends on Mg(2+) as a cofactor.

The protein localises to the cell inner membrane. It carries out the reaction all-trans-octaprenyl diphosphate + 4-hydroxybenzoate = 4-hydroxy-3-(all-trans-octaprenyl)benzoate + diphosphate. The protein operates within cofactor biosynthesis; ubiquinone biosynthesis. Catalyzes the prenylation of para-hydroxybenzoate (PHB) with an all-trans polyprenyl group. Mediates the second step in the final reaction sequence of ubiquinone-8 (UQ-8) biosynthesis, which is the condensation of the polyisoprenoid side chain with PHB, generating the first membrane-bound Q intermediate 3-octaprenyl-4-hydroxybenzoate. This is 4-hydroxybenzoate octaprenyltransferase from Pseudomonas putida (strain ATCC 700007 / DSM 6899 / JCM 31910 / BCRC 17059 / LMG 24140 / F1).